The following is a 151-amino-acid chain: Histone H2B.1 (151 aa).

2 stretches are compositionally biased toward basic and acidic residues: residues 1–28 (MAPK…EKAP) and 36–51 (EKRL…GEGK). Positions 1 to 58 (MAPKAEKKPAAKKPAEEEPATEKVEKAPAGKKPKAEKRLPAGKSKEGGEGKKGKKKAK) are disordered. 2 positions are modified to N6-acetyllysine: K7 and K37. K147 is covalently cross-linked (Glycyl lysine isopeptide (Lys-Gly) (interchain with G-Cter in ubiquitin)).

This sequence belongs to the histone H2B family. The nucleosome is a histone octamer containing two molecules each of H2A, H2B, H3 and H4 assembled in one H3-H4 heterotetramer and two H2A-H2B heterodimers. The octamer wraps approximately 147 bp of DNA. Post-translationally, can be acetylated to form H2BK6ac and H2BK33ac. In terms of processing, monoubiquitinated to form H2BK143ub1; may give a specific tag for epigenetic transcriptional activation.

It is found in the nucleus. The protein localises to the chromosome. Core component of nucleosome. Nucleosomes wrap and compact DNA into chromatin, limiting DNA accessibility to the cellular machineries which require DNA as a template. Histones thereby play a central role in transcription regulation, DNA repair, DNA replication and chromosomal stability. DNA accessibility is regulated via a complex set of post-translational modifications of histones, also called histone code, and nucleosome remodeling. In Zea mays (Maize), this protein is Histone H2B.1.